Reading from the N-terminus, the 411-residue chain is MPSVLWVLFDGGADRPVGRKTPFYVAFKPTIDYLSSLGSCGMLDPISPGIRPGSDTAHLALFGYDPYKYYTGRGAFEALGADVALKPGDVAFRTNLATVDEAGVVIDRRAGRYIAPEEARSVEEVINKIGEEIGKKYGVDVFYKSTVEHRGVLVIRGPVSHRVSDTDPHRVGAKILRSEPLERSKEAALTAEVVNEITLRFMEISKELEINKARRLQGKLPINAILLRGGGYMPQIEPIREKYNIRAAAIAGVALIRGVARAVGMDVYTAPGLGGTKDDVFDQAVKLAVELMSKYDVVFLHVKGTDSTSHDGDFNGKVSVIERLDKALAPYLDKLLNNYFVVTSDHATPVSVKEHTGEPVPILLYGPDVVQDDVSKFSELTCWRGALGRIRGIDVMPILGSYLGLTEKFGE.

This sequence belongs to the BPG-independent phosphoglycerate mutase family. A-PGAM subfamily.

The enzyme catalyses (2R)-2-phosphoglycerate = (2R)-3-phosphoglycerate. Its pathway is carbohydrate degradation; glycolysis; pyruvate from D-glyceraldehyde 3-phosphate: step 3/5. Functionally, catalyzes the interconversion of 2-phosphoglycerate and 3-phosphoglycerate. In Pyrobaculum aerophilum (strain ATCC 51768 / DSM 7523 / JCM 9630 / CIP 104966 / NBRC 100827 / IM2), this protein is 2,3-bisphosphoglycerate-independent phosphoglycerate mutase.